Consider the following 139-residue polypeptide: D-ribose pyranase (139 aa).

The Proton donor role is filled by H20. Residues D28, H106, and 128-130 (YAN) contribute to the substrate site.

It belongs to the RbsD / FucU family. RbsD subfamily. As to quaternary structure, homodecamer.

Its subcellular location is the cytoplasm. The enzyme catalyses beta-D-ribopyranose = beta-D-ribofuranose. It functions in the pathway carbohydrate metabolism; D-ribose degradation; D-ribose 5-phosphate from beta-D-ribopyranose: step 1/2. Functionally, catalyzes the interconversion of beta-pyran and beta-furan forms of D-ribose. This is D-ribose pyranase from Escherichia coli O139:H28 (strain E24377A / ETEC).